The chain runs to 334 residues: Cytoskeleton protein RodZ (334 aa).

At 1-111 (MNTEATHDQN…LGKRRKKRDG (111 aa)) the chain is on the cytoplasmic side. The 53-residue stretch at 19-71 (LRNAREQLGLSQQAVAERLCLKVSTVRDIEEDKAPSDLASTFLRGYIRSYARL) folds into the HTH cro/C1-type domain. The segment at residues 30–49 (QQAVAERLCLKVSTVRDIEE) is a DNA-binding region (H-T-H motif). A helical; Signal-anchor for type II membrane protein transmembrane segment spans residues 112-132 (WLMSFTWLVLFVVVGLTGAWW). Residues 133 to 334 (WQNHKAQQEE…TLNAEPTPAQ (202 aa)) lie on the Periplasmic side of the membrane. The tract at residues 155 to 241 (NADKDSGQSV…PSALPTSQAG (87 aa)) is disordered. Low complexity-rich tracts occupy residues 170 to 211 (AATS…TVVA) and 219 to 241 (TAATSAAPAATETPSALPTSQAG).

It belongs to the RodZ family.

The protein localises to the cell inner membrane. Functionally, cytoskeletal protein that is involved in cell-shape control through regulation of the length of the long axis. The polypeptide is Cytoskeleton protein RodZ (Salmonella agona (strain SL483)).